The sequence spans 965 residues: Forespore membrane adapter protein MUG56 (965 aa).

The segment at 70–175 (SFLMHKSTDE…VQNSNSTSTS (106 aa)) is disordered. Residues 82–101 (DTPSNLDSPSTQNVGSTNNT) are compositionally biased toward polar residues. The segment covering 102–114 (RASQSLLRRSSSF) has biased composition (low complexity). Residues 124 to 158 (THASTDNNPFSESSTLQPQTAERTSQQAVRSAITE) are compositionally biased toward polar residues. Residues 159 to 175 (TTNPSVSVQNSNSTSTS) show a composition bias toward low complexity. PH domains lie at 562–737 (PTPV…EVAS) and 800–961 (VIRM…KEIN).

The protein belongs to the SPO71 family.

The protein resides in the cytoplasm. It is found in the nucleus. It localises to the prospore membrane. Its function is as follows. May recruit a lipid transfer protein to the forespore membrane during sporulation, thereby aiding forespore membrane formation. Required for meiosis. The polypeptide is Forespore membrane adapter protein MUG56 (Schizosaccharomyces pombe (strain 972 / ATCC 24843) (Fission yeast)).